A 385-amino-acid chain; its full sequence is MNKGSRDNNHSDRGISVVLAGGGTAGHVEPAMAVADALRALDPDVRITALGTQRGLETRLVPQRGYDLELITPVPLPRKPSKDLLRLPMRVRTAIRQTRDVLTGVNADVVVGFGGYVALPAYLAARGGLTGRRKVPVVVHEANARAGLANRVGARSARRVLSAVPDSGLRNVEVVGVPVRESITSLDRAALRAQARAEFGFAEDARVLLVFGGSQGAQSINRAVSAAAKDLAAAGISVLHAHGPKNTLDLPPADPQAPPYVAVPYLDRMDLAYAAADLAICRSGAMTVAEVTAVGLPAIYVPLPIGNGEQRLNALPVVDAGGGLLVDDADLSGDTVARTVIPLLTDDSKLAAMTAAASLSGHPDAARRVAQVALEIARAARKKAS.

UDP-N-acetyl-alpha-D-glucosamine-binding positions include 24–26, N143, R180, S214, and Q310; that span reads TAG.

It belongs to the glycosyltransferase 28 family. MurG subfamily.

It localises to the cell membrane. It carries out the reaction di-trans,octa-cis-undecaprenyl diphospho-N-acetyl-alpha-D-muramoyl-L-alanyl-D-glutamyl-meso-2,6-diaminopimeloyl-D-alanyl-D-alanine + UDP-N-acetyl-alpha-D-glucosamine = di-trans,octa-cis-undecaprenyl diphospho-[N-acetyl-alpha-D-glucosaminyl-(1-&gt;4)]-N-acetyl-alpha-D-muramoyl-L-alanyl-D-glutamyl-meso-2,6-diaminopimeloyl-D-alanyl-D-alanine + UDP + H(+). It participates in cell wall biogenesis; peptidoglycan biosynthesis. Cell wall formation. Catalyzes the transfer of a GlcNAc subunit on undecaprenyl-pyrophosphoryl-MurNAc-pentapeptide (lipid intermediate I) to form undecaprenyl-pyrophosphoryl-MurNAc-(pentapeptide)GlcNAc (lipid intermediate II). The sequence is that of UDP-N-acetylglucosamine--N-acetylmuramyl-(pentapeptide) pyrophosphoryl-undecaprenol N-acetylglucosamine transferase from Mycolicibacterium smegmatis (strain ATCC 700084 / mc(2)155) (Mycobacterium smegmatis).